The following is a 224-amino-acid chain: Mammalian ependymin-related protein 1 (224 aa).

The first 37 residues, 1 to 37, serve as a signal peptide directing secretion; that stretch reads MPARAPRRLVQGPRGTWLLGSLWVWVLCGLGMAGSLG. Cystine bridges form between Cys-42-Cys-172, Cys-88-Cys-222, and Cys-113-Cys-210. 2 N-linked (GlcNAc...) asparagine glycosylation sites follow: Asn-130 and Asn-182.

Belongs to the ependymin family. Homodimer. In terms of processing, N-glycosylated; the glycan contains mannose-6-phosphate moieties. As to expression, detected in brain, small intestine and in soleus, extensor digitorum longus and white gastrocnemius (at protein level). Detected in brain and skeletal muscle, and at lower leavels in heart.

The protein resides in the lysosome lumen. It localises to the secreted. Its function is as follows. Binds anionic lipids and gangliosides at acidic pH. The protein is Mammalian ependymin-related protein 1 (Epdr1) of Mus musculus (Mouse).